A 381-amino-acid chain; its full sequence is 4-hydroxy-3-methylbut-2-en-1-yl diphosphate synthase (flavodoxin) (381 aa).

4 residues coordinate [4Fe-4S] cluster: cysteine 280, cysteine 283, cysteine 315, and glutamate 322.

This sequence belongs to the IspG family. The cofactor is [4Fe-4S] cluster.

It catalyses the reaction (2E)-4-hydroxy-3-methylbut-2-enyl diphosphate + oxidized [flavodoxin] + H2O + 2 H(+) = 2-C-methyl-D-erythritol 2,4-cyclic diphosphate + reduced [flavodoxin]. It functions in the pathway isoprenoid biosynthesis; isopentenyl diphosphate biosynthesis via DXP pathway; isopentenyl diphosphate from 1-deoxy-D-xylulose 5-phosphate: step 5/6. Functionally, converts 2C-methyl-D-erythritol 2,4-cyclodiphosphate (ME-2,4cPP) into 1-hydroxy-2-methyl-2-(E)-butenyl 4-diphosphate. The chain is 4-hydroxy-3-methylbut-2-en-1-yl diphosphate synthase (flavodoxin) from Clavibacter sepedonicus (Clavibacter michiganensis subsp. sepedonicus).